The primary structure comprises 269 residues: Protein tsct-1 (269 aa).

The protein belongs to the TSC-22/Dip/Bun family.

The chain is Protein tsct-1 from Caenorhabditis elegans.